A 366-amino-acid chain; its full sequence is Chorismate synthase (366 aa).

NADP(+) is bound by residues Arg48 and Arg54. Residues 125-127, 237-238, Gly277, 292-296, and Arg318 each bind FMN; these read RSS, NA, and KPTSS.

Belongs to the chorismate synthase family. Homotetramer. FMNH2 serves as cofactor.

The catalysed reaction is 5-O-(1-carboxyvinyl)-3-phosphoshikimate = chorismate + phosphate. It participates in metabolic intermediate biosynthesis; chorismate biosynthesis; chorismate from D-erythrose 4-phosphate and phosphoenolpyruvate: step 7/7. Functionally, catalyzes the anti-1,4-elimination of the C-3 phosphate and the C-6 proR hydrogen from 5-enolpyruvylshikimate-3-phosphate (EPSP) to yield chorismate, which is the branch point compound that serves as the starting substrate for the three terminal pathways of aromatic amino acid biosynthesis. This reaction introduces a second double bond into the aromatic ring system. The sequence is that of Chorismate synthase from Acidovorax sp. (strain JS42).